Here is a 491-residue protein sequence, read N- to C-terminus: Non-structural protein 1 (491 aa).

The segment at 1–81 (MATFKDACYH…CFLDEEPHLL (81 aa)) is RNA-binding. Residues 42-79 (CLDCCQYTNLTYCRGCALYHVCQWCSQYNRCFLDEEPH) form a zinc-binding domain region. The segment at 82 to 176 (RMRTFKDVVT…ENQTPFQFIN (95 aa)) is important for cytoskeleton localization. The tract at residues 320–491 (NVHNCKWCQI…EYDLELSDVE (172 aa)) is interaction with host IRF3. The pLxIS motif motif lies at 485–488 (LELS).

It belongs to the rotavirus NSP1 family. In terms of assembly, interacts (via C-terminus) with host IRF3; this interaction leads to IRF3 degradation. Interacts with host IRF7; this interaction leads to IRF7 degradation. Interacts with host CUL1 and CUL3.

It localises to the host cytoplasm. The protein resides in the host cytoskeleton. Functionally, plays a role in the inhibition of host innate immunity by inducing the degradation of key host factors required to activate interferon production such as IRF3, IRF5 or IRF7. Associates with components of cullin RING ligases (CRLs) including CUL1 or CUL3, which are essential multisubunit ubiquitination complexes, to modulate their activities. The chain is Non-structural protein 1 from Bos taurus (Bovine).